The chain runs to 327 residues: GMP reductase (327 aa).

The active-site Thioimidate intermediate is the Cys176. 205–228 (IIADGGIRTHGDIAKSIRFGATMV) provides a ligand contact to NADP(+).

The protein belongs to the IMPDH/GMPR family. GuaC type 2 subfamily.

The enzyme catalyses IMP + NH4(+) + NADP(+) = GMP + NADPH + 2 H(+). Catalyzes the irreversible NADPH-dependent deamination of GMP to IMP. It functions in the conversion of nucleobase, nucleoside and nucleotide derivatives of G to A nucleotides, and in maintaining the intracellular balance of A and G nucleotides. In Streptococcus equi subsp. zooepidemicus (strain H70), this protein is GMP reductase.